Consider the following 101-residue polypeptide: Integration host factor subunit beta (101 aa).

Positions 58–101 are disordered; sequence ARAGRNPRTGAHVPVDQKSVPFFKTGKEMRERLNRDTGAPDSGA. Residues 82-92 are compositionally biased toward basic and acidic residues; sequence TGKEMRERLNR.

This sequence belongs to the bacterial histone-like protein family. In terms of assembly, heterodimer of an alpha and a beta chain.

In terms of biological role, this protein is one of the two subunits of integration host factor, a specific DNA-binding protein that functions in genetic recombination as well as in transcriptional and translational control. In Rhodopseudomonas palustris (strain BisB18), this protein is Integration host factor subunit beta.